The chain runs to 185 residues: Ribosome-recycling factor (185 aa).

This sequence belongs to the RRF family.

It is found in the cytoplasm. Functionally, responsible for the release of ribosomes from messenger RNA at the termination of protein biosynthesis. May increase the efficiency of translation by recycling ribosomes from one round of translation to another. The polypeptide is Ribosome-recycling factor (Saccharophagus degradans (strain 2-40 / ATCC 43961 / DSM 17024)).